Here is a 127-residue protein sequence, read N- to C-terminus: Large ribosomal subunit protein uL22c (127 aa).

The protein belongs to the universal ribosomal protein uL22 family. In terms of assembly, part of the 50S ribosomal subunit.

Its subcellular location is the plastid. It localises to the chloroplast. Functionally, this protein binds specifically to 23S rRNA. Its function is as follows. The globular domain of the protein is located near the polypeptide exit tunnel on the outside of the subunit, while an extended beta-hairpin is found that lines the wall of the exit tunnel in the center of the 70S ribosome. This is Large ribosomal subunit protein uL22c (rpl22) from Acorus calamus var. americanus (American sweet flag).